Reading from the N-terminus, the 432-residue chain is Glutamate-1-semialdehyde 2,1-aminomutase 1 (432 aa).

Lys272 is modified (N6-(pyridoxal phosphate)lysine).

This sequence belongs to the class-III pyridoxal-phosphate-dependent aminotransferase family. HemL subfamily. As to quaternary structure, homodimer. It depends on pyridoxal 5'-phosphate as a cofactor.

The protein localises to the cytoplasm. The catalysed reaction is (S)-4-amino-5-oxopentanoate = 5-aminolevulinate. It participates in porphyrin-containing compound metabolism; protoporphyrin-IX biosynthesis; 5-aminolevulinate from L-glutamyl-tRNA(Glu): step 2/2. The polypeptide is Glutamate-1-semialdehyde 2,1-aminomutase 1 (Exiguobacterium sp. (strain ATCC BAA-1283 / AT1b)).